The following is a 272-amino-acid chain: Protein alcS (272 aa).

A compositionally biased stretch (polar residues) spans methionine 1 to threonine 14. The interval methionine 1–alanine 21 is disordered. Helical transmembrane passes span proline 63–tryptophan 83, isoleucine 91–leucine 111, valine 122–alanine 144, phenylalanine 164–alanine 184, valine 192–tryptophan 212, and leucine 225–valine 245.

It belongs to the acetate uptake transporter (AceTr) (TC 2.A.96) family.

It is found in the cell membrane. The protein resides in the cell septum. The sequence is that of Protein alcS from Aspergillus fumigatus (strain CBS 144.89 / FGSC A1163 / CEA10) (Neosartorya fumigata).